Here is a 251-residue protein sequence, read N- to C-terminus: Ditrans,polycis-undecaprenyl-diphosphate synthase ((2E,6E)-farnesyl-diphosphate specific) (251 aa).

Aspartate 20 is a catalytic residue. Aspartate 20 is a binding site for Mg(2+). Substrate contacts are provided by residues 21 to 24, tryptophan 25, arginine 33, histidine 37, and 65 to 67; these read GNGR and SSE. Asparagine 68 (proton acceptor) is an active-site residue. Residues tryptophan 69, arginine 71, arginine 188, and 194-196 contribute to the substrate site; that span reads RIS. Glutamate 207 contributes to the Mg(2+) binding site.

The protein belongs to the UPP synthase family. Homodimer. Mg(2+) serves as cofactor.

The enzyme catalyses 8 isopentenyl diphosphate + (2E,6E)-farnesyl diphosphate = di-trans,octa-cis-undecaprenyl diphosphate + 8 diphosphate. Functionally, catalyzes the sequential condensation of isopentenyl diphosphate (IPP) with (2E,6E)-farnesyl diphosphate (E,E-FPP) to yield (2Z,6Z,10Z,14Z,18Z,22Z,26Z,30Z,34E,38E)-undecaprenyl diphosphate (di-trans,octa-cis-UPP). UPP is the precursor of glycosyl carrier lipid in the biosynthesis of bacterial cell wall polysaccharide components such as peptidoglycan and lipopolysaccharide. In Vibrio vulnificus (strain CMCP6), this protein is Ditrans,polycis-undecaprenyl-diphosphate synthase ((2E,6E)-farnesyl-diphosphate specific).